Consider the following 583-residue polypeptide: Radixin (583 aa).

Residues 5–295 (INVRVTTMDA…GNHELYMRRR (291 aa)) enclose the FERM domain. A 1,2-diacyl-sn-glycero-3-phospho-(1D-myo-inositol)-binding positions include 60-63 (KLNK) and lysine 278. 2 disordered regions span residues 310-336 (REEKHQKQLERAQLENEKKKREIAEKE) and 436-527 (KKKE…VKKQ). Basic and acidic residues-rich tracts occupy residues 436–447 (KKKEEEASEWQH) and 455–464 (DLEKTKEELK). The segment covering 469 to 480 (APPPPPPPPVIP) has biased composition (pro residues). Basic and acidic residues-rich tracts occupy residues 483 to 492 (ENEHDEHDEN) and 506 to 525 (MNHRSEEERVTETQKNERVK).

Its subcellular location is the cell membrane. The protein resides in the cytoplasm. The protein localises to the cytoskeleton. Its function is as follows. Probably plays a crucial role in the binding of the barbed end of actin filaments to the plasma membrane. The polypeptide is Radixin (RDX) (Gallus gallus (Chicken)).